A 353-amino-acid polypeptide reads, in one-letter code: Interferon-stimulated 20 kDa exonuclease-like 2 (353 aa).

2 disordered regions span residues 1 to 93 (MSTL…QPLD) and 125 to 172 (ALPK…SGAS). Basic and acidic residues predominate over residues 14–23 (PPKKALEGNA). Residues 24-35 (KHRNFVKKRRLL) show a composition bias toward basic residues. A compositionally biased stretch (basic and acidic residues) spans 54 to 63 (LHSEPSKKGE). Positions 135 to 151 (RSQKKSSQKKSSKKNHP) are enriched in basic residues. A compositionally biased stretch (polar residues) spans 152 to 172 (QKNAPQNSTQAHSENKCSGAS). One can recognise an Exonuclease domain in the interval 178–353 (KMVAIDCEMV…EHLARNPPTD (176 aa)).

The protein resides in the nucleus. It is found in the nucleolus. Its function is as follows. 3'-&gt; 5'-exoribonuclease involved in ribosome biogenesis in the processing of the 12S pre-rRNA. Displays a strong specificity for a 3'-end containing a free hydroxyl group. The protein is Interferon-stimulated 20 kDa exonuclease-like 2 (ISG20L2) of Homo sapiens (Human).